The sequence spans 185 residues: Ribosome-recycling factor (185 aa).

Belongs to the RRF family.

Its subcellular location is the cytoplasm. Its function is as follows. Responsible for the release of ribosomes from messenger RNA at the termination of protein biosynthesis. May increase the efficiency of translation by recycling ribosomes from one round of translation to another. The polypeptide is Ribosome-recycling factor (Yersinia pseudotuberculosis serotype O:1b (strain IP 31758)).